The primary structure comprises 59 residues: Venom protein 37.1 (59 aa).

The signal sequence occupies residues 1–18 (MVSTLMIASVKLRLYCTA).

It belongs to the non-disulfide-bridged peptide (NDBP) superfamily. Long chain multifunctional peptide (group 2) family. As to expression, expressed by the venom gland.

It localises to the secreted. This chain is Venom protein 37.1, found in Lychas mucronatus (Chinese swimming scorpion).